Reading from the N-terminus, the 889-residue chain is A disintegrin and metalloproteinase with thrombospondin motifs 8 (889 aa).

The N-terminal stretch at 1–26 (MLPAPAAPRWPPLLLLLLLLLPLARG) is a signal peptide. The propeptide occupies 27-213 (APARPAAGGQ…PLGATSRTKR (187 aa)). Residues 138–210 (QGAGGSLAQP…PPPPLGATSR (73 aa)) form a disordered region. A compositionally biased stretch (basic and acidic residues) spans 173-183 (EGQRQERGDHQ). Positions 184–197 (EDSEEESQEEEAEG) are enriched in acidic residues. Residues 219-429 (RFVETLLVAD…GHGDCLLDAP (211 aa)) enclose the Peptidase M12B domain. 11 disulfides stabilise this stretch: C294/C347, C323/C329, C341/C424, C379/C408, C452/C477, C463/C486, C472/C507, C501/C512, C538/C575, C542/C580, and C553/C565. N-linked (GlcNAc...) asparagine glycosylation occurs at N344. H363 serves as a coordination point for Zn(2+). E364 is an active-site residue. Zn(2+) contacts are provided by H367 and H373. N400, N465, and N490 each carry an N-linked (GlcNAc...) asparagine glycan. In terms of domain architecture, Disintegrin spans 438 to 525 (GLPGRMALYQ…EEVERPKPVA (88 aa)). The TSP type-1 1 domain maps to 526–581 (DGGWAPWGPWGECSRTCGGGVQFSHRECKDPEPQNGGRYCLGRRAKYQSCHTEECP). N599 carries N-linked (GlcNAc...) asparagine glycosylation. Residues 690–831 (RKVSGSLTPT…RATTNIIQPL (142 aa)) form a spacer region. The 56-residue stretch at 833-888 (HAQWVLGDWSECSSTCGAGWQRRTVECRDPSGQASATCNKALKPEDAKPCESQLCP) folds into the TSP type-1 2 domain.

Zn(2+) serves as cofactor. In terms of processing, the precursor is cleaved by a furin endopeptidase. Glycosylated. Can be O-fucosylated by POFUT2 on a serine or a threonine residue found within the consensus sequence C1-X(2)-(S/T)-C2-G of the TSP type-1 repeat domains where C1 and C2 are the first and second cysteine residue of the repeat, respectively. Fucosylated repeats can then be further glycosylated by the addition of a beta-1,3-glucose residue by the glucosyltransferase, B3GALTL. Fucosylation mediates the efficient secretion of ADAMTS family members. Can also be C-glycosylated with one or two mannose molecules on tryptophan residues within the consensus sequence W-X-X-W of the TPRs, and N-glycosylated. These other glycosylations can also facilitate secretion. In terms of tissue distribution, highly expressed in adult and fetal lung, lower expression in brain, placenta, heart, stomach and fetal brain and kidney.

It is found in the secreted. The protein resides in the extracellular space. Its subcellular location is the extracellular matrix. Its function is as follows. Has anti-angiogenic properties. This is A disintegrin and metalloproteinase with thrombospondin motifs 8 (ADAMTS8) from Homo sapiens (Human).